The primary structure comprises 224 residues: MPGGLLLGDEAPNFEANTTIGRIRFHDFLGDSWGILFSHPRDFTPVCTTELGRAAKLAPEFAKRNVKLIALSIDSVEDHLAWSKDINAYNGETPTEKLPFPIIDDKGRDLAILLGMLDPVEKDDNNMPVTARVVFIFGPDKKLKLSILYPATTGRNFDEILRVVDSLQLTGTKPVATPVDWKKGESVMVVPTLSEEEAKQCFPKGVFTKELPSGKKYLRYTPQP.

A Thioredoxin domain is found at 5 to 169 (LLLGDEAPNF…ILRVVDSLQL (165 aa)). The tract at residues 31–40 (DSWGILFSHP) is required and sufficient for targeting to lysosomes and lamellar bodies. T44 bears the Phosphothreonine mark. Catalysis depends on C47, which acts as the Cysteine sulfenic acid (-SOH) intermediate; for peroxidase activity. K63 is modified (N6-acetyllysine). A Phosphotyrosine modification is found at Y89. T93 is subject to Phosphothreonine. Residue D140 is the For phospholipase activity of the active site. T177 is modified (phosphothreonine; by MAPK). K209 carries the N6-acetyllysine; alternate modification. K209 is subject to N6-succinyllysine; alternate.

This sequence belongs to the peroxiredoxin family. Prx6 subfamily. In terms of assembly, homodimer. Interacts with GSTP1; mediates PRDX6 glutathionylation and regeneration. Interacts with APEX1. Interacts with STH. May interact with FAM168B. May interact with HTR2A. In terms of processing, irreversibly inactivated by overoxidation of Cys-47 to sulfinic acid (Cys-SO(2)H) and sulfonic acid (Cys-SO(3)H) forms upon oxidative stress. Post-translationally, phosphorylation at Thr-177 by MAP kinases increases the phospholipase activity of the enzyme. The phosphorylated form exhibits a greater lysophosphatidylcholine acyltransferase activity compared to the non-phosphorylated form. Highly expressed in heart, kidney and liver. Moderate expression in brain and stomach. Very low levels in intestine.

It localises to the cytoplasm. The protein localises to the lysosome. It carries out the reaction a hydroperoxide + 2 glutathione = an alcohol + glutathione disulfide + H2O. It catalyses the reaction a 1,2-diacyl-sn-glycero-3-phosphocholine + H2O = a 1-acyl-sn-glycero-3-phosphocholine + a fatty acid + H(+). The catalysed reaction is a 1-acyl-sn-glycero-3-phosphocholine + an acyl-CoA = a 1,2-diacyl-sn-glycero-3-phosphocholine + CoA. The enzyme catalyses 1-hexadecanoyl-sn-glycero-3-phosphocholine + hexadecanoyl-CoA = 1,2-dihexadecanoyl-sn-glycero-3-phosphocholine + CoA. It carries out the reaction 1,2-dihexadecanoyl-sn-glycero-3-phosphocholine + H2O = 1-hexadecanoyl-sn-glycero-3-phosphocholine + hexadecanoate + H(+). With respect to regulation, MJ33 or lithium;[(2R)-1-hexadecoxy-3-(2,2,2-trifluoroethoxy)propan-2-yl] methyl phosphate inhibits its phospholipase A2 activity. CI-976 or 2,2-Dimethyl-N-(2,4,6-trimethoxyphenyl)dodecanamide inhibits its lysophosphatidylcholine acyltransferase activity. Functionally, thiol-specific peroxidase that catalyzes the reduction of hydrogen peroxide and organic hydroperoxides to water and alcohols, respectively. Can reduce H(2)O(2) and short chain organic, fatty acid, and phospholipid hydroperoxides. Has phospholipase activity. Can either reduce the oxidized sn-2 fatty acyl group of phospholipids (peroxidase activity) or hydrolyze the sn-2 ester bond of phospholipids (phospholipase activity). These activities are dependent on binding to phospholipids at acidic pH and to oxidized phospholipds at cytosolic pH. Plays a role in cell protection against oxidative stress by detoxifying peroxides and in phospholipid homeostasis. Exhibits acyl-CoA-dependent lysophospholipid acyltransferase which mediates the conversion of lysophosphatidylcholine (1-acyl-sn-glycero-3-phosphocholine or LPC) into phosphatidylcholine (1,2-diacyl-sn-glycero-3-phosphocholine or PC). Shows a clear preference for LPC as the lysophospholipid and for palmitoyl CoA as the fatty acyl substrate. This chain is Peroxiredoxin-6 (Prdx6), found in Mus musculus (Mouse).